Consider the following 534-residue polypeptide: MGGGGGEQQQLEVLHALDVAKTQWYHFTAIVVAGMGFFTDAYDLFCISLVTKLLGRIYYRVDGSPSPGTLPPHVSASVNGVAFVGTLSGQLFFGWLGDKLGRKRVYGITLMLMVLCSLASALSFGHTPTSVMATLCFFRFWLGFGIGGDYPLSATIMSEYANKKTRGAFIAAVFAMQGFGIITGGLVAILVSASFRAAFPAPPYGEDPVASTPPQADFVWRIILMLGALPAALTYYWRTKMPETARYTALVANNAKQAAADMSKVLQVVEMRNIGNNGGSRRPFGLFSGEFVRRHGLHLVGTSATWLLLDIAFYSQNLFQKDIFSAVGWIPKAATMSALEELFRIARAQTLIALCGTVPGYWFTVALIDVVGRFKIQAVGFFMMTLFMLTLALPYHHWTAPGKNHVGFLLLYGLTFFFANFGPNSTTFIVPAEIFPARLRATCHGISAASGKLGAIVGSFGFLYLAQSPDRSKTEHGYPPGIGVRNSLFLLAACNLLGLLFTFLVPESKGKSLEEMSGDAEAQEEAPPPLQTVL.

The Cytoplasmic portion of the chain corresponds to 1–29 (MGGGGGEQQQLEVLHALDVAKTQWYHFTA). A helical membrane pass occupies residues 30–50 (IVVAGMGFFTDAYDLFCISLV). At 51-75 (TKLLGRIYYRVDGSPSPGTLPPHVS) the chain is on the extracellular side. The chain crosses the membrane as a helical span at residues 76–96 (ASVNGVAFVGTLSGQLFFGWL). Residues 97 to 104 (GDKLGRKR) are Cytoplasmic-facing. The helical transmembrane segment at 105–125 (VYGITLMLMVLCSLASALSFG) threads the bilayer. At 126–127 (HT) the chain is on the extracellular side. A helical transmembrane segment spans residues 128–148 (PTSVMATLCFFRFWLGFGIGG). Residues 149–168 (DYPLSATIMSEYANKKTRGA) lie on the Cytoplasmic side of the membrane. Residues 169-189 (FIAAVFAMQGFGIITGGLVAI) form a helical membrane-spanning segment. The Extracellular segment spans residues 190–216 (LVSASFRAAFPAPPYGEDPVASTPPQA). Residues 217 to 237 (DFVWRIILMLGALPAALTYYW) form a helical membrane-spanning segment. The Cytoplasmic segment spans residues 238–294 (RTKMPETARYTALVANNAKQAAADMSKVLQVVEMRNIGNNGGSRRPFGLFSGEFVRR). The helical transmembrane segment at 295–315 (HGLHLVGTSATWLLLDIAFYS) threads the bilayer. At 316 to 350 (QNLFQKDIFSAVGWIPKAATMSALEELFRIARAQT) the chain is on the extracellular side. The helical transmembrane segment at 351 to 371 (LIALCGTVPGYWFTVALIDVV) threads the bilayer. The Cytoplasmic portion of the chain corresponds to 372–375 (GRFK). The chain crosses the membrane as a helical span at residues 376–396 (IQAVGFFMMTLFMLTLALPYH). The Extracellular segment spans residues 397–405 (HWTAPGKNH). Residues 406 to 426 (VGFLLLYGLTFFFANFGPNST) traverse the membrane as a helical segment. Residues 427 to 445 (TFIVPAEIFPARLRATCHG) lie on the Cytoplasmic side of the membrane. A helical transmembrane segment spans residues 446–466 (ISAASGKLGAIVGSFGFLYLA). Residues 467-486 (QSPDRSKTEHGYPPGIGVRN) are Extracellular-facing. The chain crosses the membrane as a helical span at residues 487–507 (SLFLLAACNLLGLLFTFLVPE). The Cytoplasmic portion of the chain corresponds to 508 to 534 (SKGKSLEEMSGDAEAQEEAPPPLQTVL). A disordered region spans residues 514–534 (EEMSGDAEAQEEAPPPLQTVL).

It belongs to the major facilitator superfamily. Phosphate:H(+) symporter (TC 2.A.1.9) family. Highly expressed in leaves and at low levels in roots. Expressed in leaf xylem parenchyma cells.

Its subcellular location is the membrane. High-affinity transporter for external inorganic phosphate (Pi). Probably involved in Pi uptake, translocation and internal transport throughout the plant. This chain is Inorganic phosphate transporter 1-6 (PHT1-6), found in Oryza sativa subsp. japonica (Rice).